The chain runs to 348 residues: MIETDRLIAASGRDREEVQDRAIRPLRLDEYIGQPVVREQMALFIQAARGRNESLDHTLIFGPPGLGKTTLANIIAQEMGVSVKSTSGPILERPGDLAAMLTNLEPHDVLFIDEIHRLSPVVEEVLYPAMEDFQLDIMIGEGPAARSIKLDLPPFTLVGATTRAGMLTNPLRDRFGIVQRLEFYSNKDLATIVSRSAGILGLPMDDKGAFEIARRARGTPRIANRLLRRVRDFAEVRGKGEITKAVADMALNLLDVDERGFDHSDRRLLLTMIEKFDGGPVGLDNIAAAIGEERHTIEDVLEPYLIQQGYIMRTPRGRVVTRHAYLHFGLNIPGRFCEGGEYAAQDDE.

Positions 4–184 (TDRLIAASGR…FGIVQRLEFY (181 aa)) are large ATPase domain (RuvB-L). ATP is bound by residues Ile23, Arg24, Gly65, Lys68, Thr69, Thr70, 131-133 (EDF), Arg174, Tyr184, and Arg221. Thr69 is a Mg(2+) binding site. Residues 185 to 255 (SNKDLATIVS…VADMALNLLD (71 aa)) form a small ATPAse domain (RuvB-S) region. The head domain (RuvB-H) stretch occupies residues 258–348 (ERGFDHSDRR…GGEYAAQDDE (91 aa)). DNA-binding residues include Arg294, Arg313, and Arg318.

Belongs to the RuvB family. As to quaternary structure, homohexamer. Forms an RuvA(8)-RuvB(12)-Holliday junction (HJ) complex. HJ DNA is sandwiched between 2 RuvA tetramers; dsDNA enters through RuvA and exits via RuvB. An RuvB hexamer assembles on each DNA strand where it exits the tetramer. Each RuvB hexamer is contacted by two RuvA subunits (via domain III) on 2 adjacent RuvB subunits; this complex drives branch migration. In the full resolvosome a probable DNA-RuvA(4)-RuvB(12)-RuvC(2) complex forms which resolves the HJ.

It localises to the cytoplasm. The enzyme catalyses ATP + H2O = ADP + phosphate + H(+). Functionally, the RuvA-RuvB-RuvC complex processes Holliday junction (HJ) DNA during genetic recombination and DNA repair, while the RuvA-RuvB complex plays an important role in the rescue of blocked DNA replication forks via replication fork reversal (RFR). RuvA specifically binds to HJ cruciform DNA, conferring on it an open structure. The RuvB hexamer acts as an ATP-dependent pump, pulling dsDNA into and through the RuvAB complex. RuvB forms 2 homohexamers on either side of HJ DNA bound by 1 or 2 RuvA tetramers; 4 subunits per hexamer contact DNA at a time. Coordinated motions by a converter formed by DNA-disengaged RuvB subunits stimulates ATP hydrolysis and nucleotide exchange. Immobilization of the converter enables RuvB to convert the ATP-contained energy into a lever motion, pulling 2 nucleotides of DNA out of the RuvA tetramer per ATP hydrolyzed, thus driving DNA branch migration. The RuvB motors rotate together with the DNA substrate, which together with the progressing nucleotide cycle form the mechanistic basis for DNA recombination by continuous HJ branch migration. Branch migration allows RuvC to scan DNA until it finds its consensus sequence, where it cleaves and resolves cruciform DNA. The chain is Holliday junction branch migration complex subunit RuvB from Pseudomonas entomophila (strain L48).